Consider the following 230-residue polypeptide: NAD(P)H-hydrate epimerase (230 aa).

The region spanning 11 to 218 is the YjeF N-terminal domain; the sequence is AIDVDQELFT…ALQRKYGLNL (208 aa). Position 61–65 (61–65) interacts with (6S)-NADPHX; sequence NNGGD. Positions 62 and 126 each coordinate K(+). Residues 130–136 and D159 contribute to the (6S)-NADPHX site; that span reads GFSFKPP. K(+) is bound at residue S162.

It belongs to the NnrE/AIBP family. It depends on K(+) as a cofactor.

It carries out the reaction (6R)-NADHX = (6S)-NADHX. The catalysed reaction is (6R)-NADPHX = (6S)-NADPHX. Catalyzes the epimerization of the S- and R-forms of NAD(P)HX, a damaged form of NAD(P)H that is a result of enzymatic or heat-dependent hydration. This is a prerequisite for the S-specific NAD(P)H-hydrate dehydratase to allow the repair of both epimers of NAD(P)HX. The chain is NAD(P)H-hydrate epimerase from Drosophila yakuba (Fruit fly).